Reading from the N-terminus, the 76-residue chain is Dermaseptin-SP2 (76 aa).

An N-terminal signal peptide occupies residues 1 to 22 (MAFLKKSLFLVLFLGLVSLSIC). A propeptide spanning residues 23-45 (EEEKRENEDEEEQEDEEQSEEKR) is cleaved from the precursor. The tract at residues 24-44 (EEKRENEDEEEQEDEEQSEEK) is disordered. The segment covering 30 to 41 (EDEEEQEDEEQS) has biased composition (acidic residues). A Glutamine amide modification is found at glutamine 73. A propeptide spanning residues 74–76 (GEQ) is cleaved from the precursor.

As to expression, expressed by the skin glands.

Its subcellular location is the secreted. The protein localises to the target cell membrane. Functionally, antimicrobial peptide with activity against Gram-positive and Gram-negative bacteria and fungi. Has been tested against E.coli (MIC=2.68-8 uM), S.aureus (ATCC 25923, MIC=2.68-8 uM), S.aureus (ATCC oxacillin resistant, MIC=2.68 uM), K.pneumoniae (MIC=10.71 uM) and C.albicans (MIC=10.71-32 uM). Probably acts by disturbing membrane functions with its alpha-helical amphipathic structure. May penetrate bacterial membranes, but stay at the mammalian membrane surface. Shows a very weak hemolytic activity. The protein is Dermaseptin-SP2 of Agalychnis spurrelli (Gliding leaf frog).